A 3262-amino-acid polypeptide reads, in one-letter code: Striated muscle-specific serine/threonine-protein kinase (3262 aa).

The interval methionine 1–arginine 33 is disordered. Arginine 33 carries the post-translational modification Omega-N-methylarginine. In terms of domain architecture, Ig-like 1 spans proline 45–threonine 126. Residue serine 141 is modified to Phosphoserine. Disordered regions lie at residues arginine 155–glutamate 185, glutamate 198–histidine 226, glycine 280–glycine 720, and leucine 814–threonine 875. Polar residues predominate over residues serine 158 to glutamate 185. The span at proline 301–proline 317 shows a compositional bias: pro residues. Phosphoserine is present on residues serine 368 and serine 375. The residue at position 379 (threonine 379) is a Phosphothreonine. 2 positions are modified to phosphoserine: serine 382 and serine 385. The segment covering isoleucine 404–aspartate 422 has biased composition (basic and acidic residues). Position 423 is a phosphoserine (serine 423). Residue threonine 453 is modified to Phosphothreonine. Residues serine 457, serine 463, serine 493, serine 511, and serine 531 each carry the phosphoserine modification. A compositionally biased stretch (basic and acidic residues) spans glutamate 459–arginine 473. Positions threonine 510–leucine 522 are enriched in basic and acidic residues. The segment covering arginine 543–alanine 552 has biased composition (polar residues). A Phosphoserine modification is found at serine 554. Composition is skewed to basic and acidic residues over residues proline 624–proline 638 and glutamate 663–glutamate 680. An Ig-like 2 domain is found at proline 727–alanine 815. Residues glycine 820–threonine 830 show a composition bias toward polar residues. 3 Ig-like domains span residues proline 874–glutamate 963, proline 968–threonine 1062, and proline 1069–tyrosine 1157. Cysteine 994 and cysteine 1046 are oxidised to a cystine. Serine 1133 and serine 1177 each carry phosphoserine. The interval arginine 1162–glycine 1185 is disordered. An Ig-like 6 domain is found at proline 1193–threonine 1283. The Fibronectin type-III 1 domain maps to proline 1290 to histidine 1387. Ig-like domains are found at residues proline 1389–glutamate 1485 and proline 1490–serine 1578. A disulfide bond links cysteine 1413 and cysteine 1469. Residues tyrosine 1606–phenylalanine 1859 form the Protein kinase 1 domain. ATP is bound by residues isoleucine 1612–leucine 1620 and lysine 1635. Aspartate 1724 functions as the Proton acceptor in the catalytic mechanism. The interval methionine 1913–glutamine 2571 is disordered. Over residues proline 1918–serine 1927 the composition is skewed to low complexity. Basic and acidic residues predominate over residues glutamate 1980 to glutamate 1990. A phosphoserine mark is found at serine 1993, serine 2004, serine 2019, serine 2020, and serine 2042. Positions serine 2009 to serine 2019 are enriched in basic and acidic residues. Arginine 2060 is subject to Asymmetric dimethylarginine; alternate. Arginine 2060 is modified (omega-N-methylarginine; alternate). Low complexity predominate over residues alanine 2069–arginine 2081. Serine 2114 and serine 2135 each carry phosphoserine. Arginine 2144 is modified (omega-N-methylarginine). Residues glutamate 2168–glutamine 2179 are compositionally biased toward polar residues. Residues serine 2182 and serine 2207 each carry the phosphoserine modification. Polar residues predominate over residues isoleucine 2193–serine 2207. The span at proline 2208–glutamate 2218 shows a compositional bias: pro residues. Residues lysine 2219–arginine 2229 show a composition bias toward basic and acidic residues. Low complexity predominate over residues alanine 2230–aspartate 2268. The span at phenylalanine 2337 to proline 2348 shows a compositional bias: basic and acidic residues. Positions leucine 2349–arginine 2358 are enriched in low complexity. The span at serine 2359–isoleucine 2375 shows a compositional bias: basic and acidic residues. Residue serine 2379 is modified to Phosphoserine. Phosphothreonine is present on threonine 2383. Positions leucine 2387–glutamine 2398 are enriched in basic and acidic residues. Phosphoserine is present on residues serine 2413, serine 2417, serine 2441, serine 2442, serine 2447, and serine 2451. Over residues serine 2461–serine 2487 the composition is skewed to low complexity. Polar residues predominate over residues glutamine 2513 to proline 2523. Residues serine 2524 and serine 2527 each carry the phosphoserine modification. Residues serine 2524–glutamate 2543 show a composition bias toward low complexity. Residues serine 2546–lysine 2557 are compositionally biased toward basic residues. Serine 2562 bears the Phosphoserine mark. A compositionally biased stretch (polar residues) spans serine 2562–glutamine 2571. Positions proline 2586–alanine 2676 constitute an Ig-like 9 domain. A disulfide bridge connects residues cysteine 2608 and cysteine 2660. The region spanning lysine 2683–serine 2777 is the Fibronectin type-III 2 domain. Disordered regions lie at residues arginine 2756–asparagine 2832, alanine 2857–serine 2899, and alanine 2912–proline 2960. The residue at position 2774 (threonine 2774) is a Phosphothreonine. Composition is skewed to low complexity over residues proline 2775–proline 2789 and proline 2803–alanine 2831. Serine 2777 carries the post-translational modification Phosphoserine. In terms of domain architecture, Fibronectin type-III 3 spans proline 2865–alanine 2968. Over residues glycine 2883–serine 2899 the composition is skewed to polar residues. Residues proline 2913 to proline 2927 show a composition bias toward pro residues. A compositionally biased stretch (polar residues) spans serine 2943–arginine 2953. Serine 2944 is subject to Phosphoserine. A Protein kinase 2 domain is found at threonine 2946 to leucine 3213. The active-site Proton acceptor is aspartate 3080.

The protein belongs to the protein kinase superfamily. CAMK Ser/Thr protein kinase family. As to quaternary structure, interacts with MTM1. Isoform 3 is found as a monomer or homodimer. May be autophosphorylated. In terms of tissue distribution, isoform 1 is preferentially expressed in striated muscle. Non-kinase form such as isoform 3 is predominantly expressed in the aorta. Isoform 3 appears to be expressed only in highly differentiated ASMC in normal vessel walls and down-regulated in dedifferentiated ASMC in vivo. In response to vascular injuries ASMC dedifferentiate and change from a quiescent and contractile phenotype to a proliferative and synthetic phenotype. This proliferation of vascular smooth muscle cells is one of the most prominent features of atherosclerosis. Isoform 1 and isoform 4 are expressed in cardiomyocytes of the developing heart.

It localises to the nucleus. It catalyses the reaction L-seryl-[protein] + ATP = O-phospho-L-seryl-[protein] + ADP + H(+). The catalysed reaction is L-threonyl-[protein] + ATP = O-phospho-L-threonyl-[protein] + ADP + H(+). Functionally, isoform 3 may have a role in regulating the growth and differentiation of arterial smooth muscle cells. In Mus musculus (Mouse), this protein is Striated muscle-specific serine/threonine-protein kinase (Speg).